The following is a 213-amino-acid chain: Phosphatidylserine decarboxylase proenzyme (213 aa).

S182 functions as the Schiff-base intermediate with substrate; via pyruvic acid in the catalytic mechanism. S182 is modified (pyruvic acid (Ser); by autocatalysis).

It belongs to the phosphatidylserine decarboxylase family. PSD-A subfamily. Heterodimer of a large membrane-associated beta subunit and a small pyruvoyl-containing alpha subunit. Pyruvate is required as a cofactor. Post-translationally, is synthesized initially as an inactive proenzyme. Formation of the active enzyme involves a self-maturation process in which the active site pyruvoyl group is generated from an internal serine residue via an autocatalytic post-translational modification. Two non-identical subunits are generated from the proenzyme in this reaction, and the pyruvate is formed at the N-terminus of the alpha chain, which is derived from the carboxyl end of the proenzyme. The post-translation cleavage follows an unusual pathway, termed non-hydrolytic serinolysis, in which the side chain hydroxyl group of the serine supplies its oxygen atom to form the C-terminus of the beta chain, while the remainder of the serine residue undergoes an oxidative deamination to produce ammonia and the pyruvoyl prosthetic group on the alpha chain.

It localises to the cell membrane. It catalyses the reaction a 1,2-diacyl-sn-glycero-3-phospho-L-serine + H(+) = a 1,2-diacyl-sn-glycero-3-phosphoethanolamine + CO2. It functions in the pathway phospholipid metabolism; phosphatidylethanolamine biosynthesis; phosphatidylethanolamine from CDP-diacylglycerol: step 2/2. Functionally, catalyzes the formation of phosphatidylethanolamine (PtdEtn) from phosphatidylserine (PtdSer). This chain is Phosphatidylserine decarboxylase proenzyme, found in Geotalea daltonii (strain DSM 22248 / JCM 15807 / FRC-32) (Geobacter daltonii).